Here is a 178-residue protein sequence, read N- to C-terminus: ATP-dependent protease subunit HslV (178 aa).

Threonine 2 is an active-site residue. Residues serine 159, cysteine 162, and threonine 165 each contribute to the Na(+) site.

Belongs to the peptidase T1B family. HslV subfamily. As to quaternary structure, a double ring-shaped homohexamer of HslV is capped on each side by a ring-shaped HslU homohexamer. The assembly of the HslU/HslV complex is dependent on binding of ATP.

It is found in the cytoplasm. The enzyme catalyses ATP-dependent cleavage of peptide bonds with broad specificity.. With respect to regulation, allosterically activated by HslU binding. Functionally, protease subunit of a proteasome-like degradation complex believed to be a general protein degrading machinery. The protein is ATP-dependent protease subunit HslV of Buchnera aphidicola subsp. Cinara cedri (strain Cc).